The sequence spans 89 residues: Large ribosomal subunit protein bL27 (89 aa).

Positions 1-26 (MAQKKAGGSSRNGRDSVGQRRGVKRF) are disordered.

This sequence belongs to the bacterial ribosomal protein bL27 family.

In Desulfovibrio desulfuricans (strain ATCC 27774 / DSM 6949 / MB), this protein is Large ribosomal subunit protein bL27.